The following is a 193-amino-acid chain: Capsid protein (193 aa).

Its subcellular location is the virion. The protein is Capsid protein of Apple chlorotic leaf spot virus (isolate apple) (ACLSV).